A 473-amino-acid polypeptide reads, in one-letter code: Sulfate adenylyltransferase subunit 1 (473 aa).

One can recognise a tr-type G domain in the interval Lys-19–Glu-238. The interval Gly-28–Ser-35 is G1. Gly-28–Ser-35 serves as a coordination point for GTP. The tract at residues Gly-86 to Asp-90 is G2. The segment at Asp-107–Gly-110 is G3. GTP is bound by residues Asp-107–His-111 and Asn-162–Asp-165. The tract at residues Asn-162–Asp-165 is G4. The tract at residues Ser-200–Leu-202 is G5.

Belongs to the TRAFAC class translation factor GTPase superfamily. Classic translation factor GTPase family. CysN/NodQ subfamily. Heterodimer composed of CysD, the smaller subunit, and CysN.

The enzyme catalyses sulfate + ATP + H(+) = adenosine 5'-phosphosulfate + diphosphate. The protein operates within sulfur metabolism; hydrogen sulfide biosynthesis; sulfite from sulfate: step 1/3. In terms of biological role, with CysD forms the ATP sulfurylase (ATPS) that catalyzes the adenylation of sulfate producing adenosine 5'-phosphosulfate (APS) and diphosphate, the first enzymatic step in sulfur assimilation pathway. APS synthesis involves the formation of a high-energy phosphoric-sulfuric acid anhydride bond driven by GTP hydrolysis by CysN coupled to ATP hydrolysis by CysD. The chain is Sulfate adenylyltransferase subunit 1 from Buchnera aphidicola subsp. Acyrthosiphon pisum (strain Tuc7).